A 90-amino-acid chain; its full sequence is Putative defensin-like protein 243 (90 aa).

The first 19 residues, 1–19, serve as a signal peptide directing secretion; the sequence is MKVEVIFLASCVLFSLIHA. Disulfide bonds link C33–C88, C43–C72, C53–C82, and C70–C84.

It belongs to the DEFL family.

It localises to the secreted. The sequence is that of Putative defensin-like protein 243 (SCRL9) from Arabidopsis thaliana (Mouse-ear cress).